Here is a 119-residue protein sequence, read N- to C-terminus: Immunoglobulin heavy variable 2-26 (119 aa).

A signal peptide spans 1–19 (MDTLCYTLLLLTTPSWVLS). A Pyrrolidone carboxylic acid modification is found at Q20. Residues 20-44 (QVTLKESGPVLVKPTETLTLTCTVS) are framework-1. The region spanning 20–119 (QVTLKESGPV…DTATYYCARI (100 aa)) is the Ig-like domain. Residues C41 and C116 are joined by a disulfide bond. The interval 45-54 (GFSLSNARMG) is complementarity-determining-1. Residues 55-71 (VSWIRQPPGKALEWLAH) form a framework-2 region. Positions 72–78 (IFSNDEK) are complementarity-determining-2. Residues 79-116 (SYSTSLKSRLTISKDTSKSQVVLTMTNMDPVDTATYYC) are framework-3. The tract at residues 117-119 (ARI) is complementarity-determining-3.

As to quaternary structure, immunoglobulins are composed of two identical heavy chains and two identical light chains; disulfide-linked.

Its subcellular location is the secreted. The protein resides in the cell membrane. In terms of biological role, v region of the variable domain of immunoglobulin heavy chains that participates in the antigen recognition. Immunoglobulins, also known as antibodies, are membrane-bound or secreted glycoproteins produced by B lymphocytes. In the recognition phase of humoral immunity, the membrane-bound immunoglobulins serve as receptors which, upon binding of a specific antigen, trigger the clonal expansion and differentiation of B lymphocytes into immunoglobulins-secreting plasma cells. Secreted immunoglobulins mediate the effector phase of humoral immunity, which results in the elimination of bound antigens. The antigen binding site is formed by the variable domain of one heavy chain, together with that of its associated light chain. Thus, each immunoglobulin has two antigen binding sites with remarkable affinity for a particular antigen. The variable domains are assembled by a process called V-(D)-J rearrangement and can then be subjected to somatic hypermutations which, after exposure to antigen and selection, allow affinity maturation for a particular antigen. This chain is Immunoglobulin heavy variable 2-26, found in Homo sapiens (Human).